Here is a 598-residue protein sequence, read N- to C-terminus: Kinesin-like protein klp-3 (598 aa).

2 coiled-coil regions span residues 19-66 (EVEL…FIQG) and 89-118 (GNLS…LETD). Residues 133–155 (ALSRDSSCSVPRSVSPQPTGDVI) form a disordered region. Residues 136 to 150 (RDSSCSVPRSVSPQP) show a composition bias toward polar residues. Positions 170–248 (HWKKLQRCAE…LVELNGNIRV (79 aa)) form a coiled coil. The Kinesin motor domain occupies 245–565 (NIRVFYRIRP…VNFAEKIGQV (321 aa)). 328-335 (GHTGSGKT) lines the ATP pocket. The segment at 569–598 (SGTMKREPTRRSMTGISSGQRREIPASPRK) is disordered.

It belongs to the TRAFAC class myosin-kinesin ATPase superfamily. Kinesin family.

Its subcellular location is the cytoplasm. It localises to the cytoskeleton. The chain is Kinesin-like protein klp-3 (klp-3) from Caenorhabditis elegans.